Reading from the N-terminus, the 294-residue chain is Acetylglutamate kinase (294 aa).

Residues 63–64 (GG), R85, and N188 each bind substrate.

It belongs to the acetylglutamate kinase family. ArgB subfamily.

The protein resides in the cytoplasm. The enzyme catalyses N-acetyl-L-glutamate + ATP = N-acetyl-L-glutamyl 5-phosphate + ADP. Its pathway is amino-acid biosynthesis; L-arginine biosynthesis; N(2)-acetyl-L-ornithine from L-glutamate: step 2/4. Catalyzes the ATP-dependent phosphorylation of N-acetyl-L-glutamate. The chain is Acetylglutamate kinase from Methanococcus maripaludis (strain C5 / ATCC BAA-1333).